Reading from the N-terminus, the 507-residue chain is Glycine, alanine and asparagine-rich protein (507 aa).

Residues 1–17 (MLRVPLLVLCLALSVGA) form the signal peptide. A coiled-coil region spans residues 158–185 (SAQALASATAELQAAQDAYDQASAYAEA). Residues 462–498 (GNGNGGNGRNGNGGNGRNGNGGNGGNGNGRNGRGGRY) show a composition bias toward gly residues. Residues 462–507 (GNGNGGNGRNGNGGNGRNGNGGNGGNGNGRNGRGGRYYYGSSDYYY) form a disordered region.

As to expression, component of the acid-soluble and acid-insoluble organic matrix of calcified shell layers (at protein level).

It localises to the secreted. The protein is Glycine, alanine and asparagine-rich protein of Haliotis asinina (Donkey's ear abalone).